Here is a 725-residue protein sequence, read N- to C-terminus: D-(-)-3-hydroxybutyrate oligomer hydrolase (725 aa).

Residues 1 to 22 (MNTTRDANRLRQRASLSGLALA) form the signal peptide. The Charge relay system role is filled by Ser-322.

It belongs to the D-(-)-3-hydroxybutyrate oligomer hydrolase family.

It localises to the secreted. It carries out the reaction (3R)-hydroxybutanoate dimer + H2O = 2 (R)-3-hydroxybutanoate + H(+). It functions in the pathway lipid metabolism; butanoate metabolism. Functionally, participates in the degradation of poly-3-hydroxybutyrate (PHB). It works downstream of poly(3-hydroxybutyrate) depolymerase, hydrolyzing D(-)-3-hydroxybutyrate oligomers of various length (3HB-oligomers) into 3HB-monomers. This Ralstonia nicotianae (strain ATCC BAA-1114 / GMI1000) (Ralstonia solanacearum) protein is D-(-)-3-hydroxybutyrate oligomer hydrolase.